A 381-amino-acid polypeptide reads, in one-letter code: Subtilisin NAT (381 aa).

The signal sequence occupies residues 1 to 29; the sequence is MRSKKLWISLLFALTLIFTMAFSNMSAQA. Positions 30–106 are excised as a propeptide; it reads AGKSSTEKKY…VEEDHIAHEY (77 aa). The region spanning 38-103 is the Inhibitor I9 domain; that stretch reads KYIVGFKQTM…VAYVEEDHIA (66 aa). In terms of domain architecture, Peptidase S8 spans 111-380; the sequence is PYGISQIKAP…KGLINVQAAA (270 aa). Aspartate 138 functions as the Charge relay system in the catalytic mechanism. Position 147 (aspartate 147) interacts with Ca(2+). Histidine 170 (charge relay system) is an active-site residue. Residues leucine 181, asparagine 183, isoleucine 185, valine 187, alanine 275, tyrosine 277, threonine 280, and aspartate 303 each coordinate Ca(2+). The active-site Charge relay system is serine 327.

This sequence belongs to the peptidase S8 family. Monomer. Requires Ca(2+) as cofactor.

The protein resides in the secreted. It carries out the reaction Hydrolysis of proteins with broad specificity for peptide bonds, and a preference for a large uncharged residue in P1. Hydrolyzes peptide amides.. Its activity is regulated as follows. Inhibited by PMSF (phenylmethylsulfonyl fluoride). Its function is as follows. Subtilisin is an extracellular alkaline serine protease, it catalyzes the hydrolysis of proteins and peptide amides. Subtilisin NAT also has fibrinolytic activity. The chain is Subtilisin NAT from Bacillus subtilis subsp. natto.